Reading from the N-terminus, the 244-residue chain is 6-carboxyhexanoate--CoA ligase (244 aa).

It belongs to the BioW family. In terms of assembly, homodimer. Requires Mg(2+) as cofactor.

It carries out the reaction heptanedioate + ATP + CoA = 6-carboxyhexanoyl-CoA + AMP + diphosphate. It functions in the pathway metabolic intermediate metabolism; pimeloyl-CoA biosynthesis; pimeloyl-CoA from pimelate: step 1/1. Catalyzes the transformation of pimelate into pimeloyl-CoA with concomitant hydrolysis of ATP to AMP. The protein is 6-carboxyhexanoate--CoA ligase of Methanococcus maripaludis (strain C7 / ATCC BAA-1331).